Reading from the N-terminus, the 399-residue chain is Argininosuccinate synthase (399 aa).

9-17 (AYSGGLDTS) contacts ATP. Y85 is an L-citrulline binding site. Residue G115 coordinates ATP. Residues T117, N121, and D122 each coordinate L-aspartate. L-citrulline is bound at residue N121. 4 residues coordinate L-citrulline: R125, S173, E258, and Y270.

Belongs to the argininosuccinate synthase family. Type 1 subfamily. In terms of assembly, homotetramer.

It is found in the cytoplasm. It carries out the reaction L-citrulline + L-aspartate + ATP = 2-(N(omega)-L-arginino)succinate + AMP + diphosphate + H(+). Its pathway is amino-acid biosynthesis; L-arginine biosynthesis; L-arginine from L-ornithine and carbamoyl phosphate: step 2/3. The polypeptide is Argininosuccinate synthase (Streptococcus thermophilus (strain CNRZ 1066)).